Consider the following 60-residue polypeptide: MSQKTVKVQLVRSLIGTREDHRATVRGLGLRRINSVSELQDTPAVRGMINKVSYLVKVLA.

Belongs to the universal ribosomal protein uL30 family. In terms of assembly, part of the 50S ribosomal subunit.

This Cupriavidus necator (strain ATCC 17699 / DSM 428 / KCTC 22496 / NCIMB 10442 / H16 / Stanier 337) (Ralstonia eutropha) protein is Large ribosomal subunit protein uL30.